The following is a 362-amino-acid chain: 3-dehydroquinate synthase (362 aa).

Residues 71-76, 105-109, 129-130, lysine 142, lysine 151, and 169-172 contribute to the NAD(+) site; these read DGEKYK, GVIGD, TT, and CLKT. Residues glutamate 184, histidine 247, and histidine 264 each coordinate Zn(2+).

Belongs to the sugar phosphate cyclases superfamily. Dehydroquinate synthase family. The cofactor is Co(2+). Zn(2+) is required as a cofactor. Requires NAD(+) as cofactor.

The protein localises to the cytoplasm. The catalysed reaction is 7-phospho-2-dehydro-3-deoxy-D-arabino-heptonate = 3-dehydroquinate + phosphate. It participates in metabolic intermediate biosynthesis; chorismate biosynthesis; chorismate from D-erythrose 4-phosphate and phosphoenolpyruvate: step 2/7. Functionally, catalyzes the conversion of 3-deoxy-D-arabino-heptulosonate 7-phosphate (DAHP) to dehydroquinate (DHQ). The chain is 3-dehydroquinate synthase from Citrobacter koseri (strain ATCC BAA-895 / CDC 4225-83 / SGSC4696).